Here is a 347-residue protein sequence, read N- to C-terminus: Phenylalanine--tRNA ligase alpha subunit (347 aa).

Mg(2+) is bound at residue E261.

This sequence belongs to the class-II aminoacyl-tRNA synthetase family. Phe-tRNA synthetase alpha subunit type 1 subfamily. As to quaternary structure, tetramer of two alpha and two beta subunits. Mg(2+) serves as cofactor.

The protein localises to the cytoplasm. It carries out the reaction tRNA(Phe) + L-phenylalanine + ATP = L-phenylalanyl-tRNA(Phe) + AMP + diphosphate + H(+). In Streptococcus equi subsp. equi (strain 4047), this protein is Phenylalanine--tRNA ligase alpha subunit.